A 156-amino-acid polypeptide reads, in one-letter code: ATP synthase subunit b (156 aa).

A helical transmembrane segment spans residues 3–23 (ITLTIFAQALAFAGLIWIVAT).

This sequence belongs to the ATPase B chain family. In terms of assembly, F-type ATPases have 2 components, F(1) - the catalytic core - and F(0) - the membrane proton channel. F(1) has five subunits: alpha(3), beta(3), gamma(1), delta(1), epsilon(1). F(0) has three main subunits: a(1), b(2) and c(10-14). The alpha and beta chains form an alternating ring which encloses part of the gamma chain. F(1) is attached to F(0) by a central stalk formed by the gamma and epsilon chains, while a peripheral stalk is formed by the delta and b chains.

It localises to the cell inner membrane. Its function is as follows. F(1)F(0) ATP synthase produces ATP from ADP in the presence of a proton or sodium gradient. F-type ATPases consist of two structural domains, F(1) containing the extramembraneous catalytic core and F(0) containing the membrane proton channel, linked together by a central stalk and a peripheral stalk. During catalysis, ATP synthesis in the catalytic domain of F(1) is coupled via a rotary mechanism of the central stalk subunits to proton translocation. Functionally, component of the F(0) channel, it forms part of the peripheral stalk, linking F(1) to F(0). This Xanthomonas axonopodis pv. citri (strain 306) protein is ATP synthase subunit b.